We begin with the raw amino-acid sequence, 143 residues long: uncharacterized protein (143 aa).

The next 4 helical transmembrane spans lie at 7 to 29 (LFLF…LSLV), 52 to 74 (FSLY…NTYL), 87 to 105 (LGVF…LWAG), and 120 to 142 (WLGI…IRLG).

Its subcellular location is the cell membrane. This is an uncharacterized protein from Aquifex aeolicus (strain VF5).